Here is a 427-residue protein sequence, read N- to C-terminus: Serine--tRNA ligase (427 aa).

230–232 (TAE) contributes to the L-serine binding site. 261–263 (RAE) is an ATP binding site. Position 284 (Glu-284) interacts with L-serine. Residue 348 to 351 (EISS) participates in ATP binding. Ser-384 contacts L-serine.

It belongs to the class-II aminoacyl-tRNA synthetase family. Type-1 seryl-tRNA synthetase subfamily. Homodimer. The tRNA molecule binds across the dimer.

The protein localises to the cytoplasm. The catalysed reaction is tRNA(Ser) + L-serine + ATP = L-seryl-tRNA(Ser) + AMP + diphosphate + H(+). It catalyses the reaction tRNA(Sec) + L-serine + ATP = L-seryl-tRNA(Sec) + AMP + diphosphate + H(+). It participates in aminoacyl-tRNA biosynthesis; selenocysteinyl-tRNA(Sec) biosynthesis; L-seryl-tRNA(Sec) from L-serine and tRNA(Sec): step 1/1. Catalyzes the attachment of serine to tRNA(Ser). Is also able to aminoacylate tRNA(Sec) with serine, to form the misacylated tRNA L-seryl-tRNA(Sec), which will be further converted into selenocysteinyl-tRNA(Sec). This Syntrophomonas wolfei subsp. wolfei (strain DSM 2245B / Goettingen) protein is Serine--tRNA ligase.